We begin with the raw amino-acid sequence, 491 residues long: Peptidoglycan D,D-transpeptidase PbpA (491 aa).

Residues M1–V8 are Cytoplasmic-facing. The helical; Signal-anchor for type II membrane protein transmembrane segment at A9–F29 threads the bilayer. The Periplasmic portion of the chain corresponds to A30–S491. Positions G160–A484 are transpeptidase. Residue S222 is the Acyl-ester intermediate of the active site.

Belongs to the transpeptidase family.

It is found in the cell inner membrane. It catalyses the reaction Preferential cleavage: (Ac)2-L-Lys-D-Ala-|-D-Ala. Also transpeptidation of peptidyl-alanyl moieties that are N-acyl substituents of D-alanine.. It functions in the pathway cell wall biogenesis; peptidoglycan biosynthesis. Functionally, transpeptidase that catalyzes cross-linking of the peptidoglycan cell wall. Required for the regulation of cell length. The polypeptide is Peptidoglycan D,D-transpeptidase PbpA (pbpA) (Mycolicibacterium smegmatis (strain ATCC 700084 / mc(2)155) (Mycobacterium smegmatis)).